Reading from the N-terminus, the 189-residue chain is UPF0312 protein VC_A0539 (189 aa).

The signal sequence occupies residues 1 to 22; the sequence is MKKTLMAVGLAAVMSIPFAANA.

The protein belongs to the UPF0312 family. Type 1 subfamily.

It is found in the periplasm. This is UPF0312 protein VC_A0539 from Vibrio cholerae serotype O1 (strain ATCC 39315 / El Tor Inaba N16961).